A 653-amino-acid chain; its full sequence is Mannosyl-oligosaccharide 1,2-alpha-mannosidase IA (653 aa).

Over 1–41 the chain is Cytoplasmic; the sequence is MPVGGLLPLFSSPAGGVLGGGLGGGGGRKGSGPAALRLTEK. Residues 42–62 traverse the membrane as a helical; Signal-anchor for type II membrane protein segment; that stretch reads FVLLLVFSAFITLCFGAIFFL. Residues 63 to 653 are Lumenal-facing; that stretch reads PDSSKLLSGV…DKKEVEIREE (591 aa). A disordered region spans residues 81 to 116; the sequence is QPAADHKPGPGARAEDAAEGRARRREEGAPGDPEAA. Over residues 84-108 the composition is skewed to basic and acidic residues; it reads ADHKPGPGARAEDAAEGRARRREEG. An intrachain disulfide couples Cys476 to Cys508. Asn513 carries N-linked (GlcNAc...) asparagine glycosylation. Glu522 functions as the Proton donor in the catalytic mechanism.

Belongs to the glycosyl hydrolase 47 family. It depends on Ca(2+) as a cofactor.

Its subcellular location is the golgi apparatus membrane. It catalyses the reaction N(4)-(alpha-D-Man-(1-&gt;2)-alpha-D-Man-(1-&gt;2)-alpha-D-Man-(1-&gt;3)-[alpha-D-Man-(1-&gt;2)-alpha-D-Man-(1-&gt;3)-[alpha-D-Man-(1-&gt;2)-alpha-D-Man-(1-&gt;6)]-alpha-D-Man-(1-&gt;6)]-beta-D-Man-(1-&gt;4)-beta-D-GlcNAc-(1-&gt;4)-beta-D-GlcNAc)-L-asparaginyl-[protein] (N-glucan mannose isomer 9A1,2,3B1,2,3) + 4 H2O = N(4)-(alpha-D-Man-(1-&gt;3)-[alpha-D-Man-(1-&gt;3)-[alpha-D-Man-(1-&gt;6)]-alpha-D-Man-(1-&gt;6)]-beta-D-Man-(1-&gt;4)-beta-D-GlcNAc-(1-&gt;4)-beta-D-GlcNAc)-L-asparaginyl-[protein] (N-glucan mannose isomer 5A1,2) + 4 beta-D-mannose. The enzyme catalyses N(4)-(alpha-D-Man-(1-&gt;2)-alpha-D-Man-(1-&gt;2)-alpha-D-Man-(1-&gt;3)-[alpha-D-Man-(1-&gt;3)-[alpha-D-Man-(1-&gt;2)-alpha-D-Man-(1-&gt;6)]-alpha-D-Man-(1-&gt;6)]-beta-D-Man-(1-&gt;4)-beta-D-GlcNAc-(1-&gt;4)-beta-D-GlcNAc)-L-asparaginyl-[protein] (N-glucan mannose isomer 8A1,2,3B1,3) + 3 H2O = N(4)-(alpha-D-Man-(1-&gt;3)-[alpha-D-Man-(1-&gt;3)-[alpha-D-Man-(1-&gt;6)]-alpha-D-Man-(1-&gt;6)]-beta-D-Man-(1-&gt;4)-beta-D-GlcNAc-(1-&gt;4)-beta-D-GlcNAc)-L-asparaginyl-[protein] (N-glucan mannose isomer 5A1,2) + 3 beta-D-mannose. The protein operates within protein modification; protein glycosylation. Its activity is regulated as follows. Inhibited by both 1-deoxymannojirimycin and kifunensine. In terms of biological role, involved in the maturation of Asn-linked oligosaccharides. Progressively trim alpha-1,2-linked mannose residues from Man(9)GlcNAc(2) to produce Man(5)GlcNAc(2). The chain is Mannosyl-oligosaccharide 1,2-alpha-mannosidase IA (MAN1A1) from Homo sapiens (Human).